Here is a 118-residue protein sequence, read N- to C-terminus: Galanin peptides (118 aa).

Positions 1-19 are cleaved as a signal peptide; sequence MHRCVGGVCVSLIVCAFLT. The propeptide occupies 20–30; that stretch reads ETLGMVIAAKE. At Ala61 the chain carries Alanine amide.

Belongs to the galanin family. Strongly expressed in brain and stomach, moderately in the eye, and very weakly in heart, kidney and gills. Not detected in liver.

The protein resides in the secreted. Its function is as follows. Endocrine hormone of the central and peripheral nervous systems that binds and activates the G protein-coupled receptors GALR1 (galr1a and galr1b) and GALR2 (galr2a and galr2b). This small neuropeptide may regulate diverse physiologic functions including contraction of smooth muscle of the gastrointestinal and genitourinary tract, growth hormone and insulin release and adrenal secretion. The protein is Galanin peptides of Danio rerio (Zebrafish).